A 91-amino-acid chain; its full sequence is Apolipoprotein C-III (91 aa).

The signal sequence occupies residues 1-20; the sequence is MQPRVLLAVTLLALLVSARA. Methionine sulfoxide is present on methionine 63. Residues 68 to 91 are lipid-binding; it reads DSMKGYWTSLIGRLSGFLDSTPSS.

The protein belongs to the apolipoprotein C3 family.

The protein resides in the secreted. In terms of biological role, component of triglyceride-rich very low density lipoproteins (VLDL) and high density lipoproteins (HDL) in plasma. Plays a multifaceted role in triglyceride homeostasis. Intracellularly, promotes hepatic very low density lipoprotein 1 (VLDL1) assembly and secretion; extracellularly, attenuates hydrolysis and clearance of triglyceride-rich lipoproteins (TRLs). Impairs the lipolysis of TRLs by inhibiting lipoprotein lipase and the hepatic uptake of TRLs by remnant receptors. Formed of several curved helices connected via semiflexible hinges, so that it can wrap tightly around the curved micelle surface and easily adapt to the different diameters of its natural binding partners. In Cavia porcellus (Guinea pig), this protein is Apolipoprotein C-III (APOC3).